The sequence spans 1363 residues: Homeobox protein 13 (1363 aa).

Positions 15 to 73 form a coiled coil; that stretch reads FVMEQIQQQQQQQQQQQQQQQQQQQQQQQQQQQQLQQQQQQQQQQQQQQQQQQQQQQQN. 9 disordered regions span residues 66 to 96, 120 to 177, 308 to 437, 621 to 731, 765 to 818, 857 to 911, 1001 to 1137, 1166 to 1202, and 1270 to 1341; these read QQQQQQQNPKMNNQPNETRLPSPPLLNSTVP, SQHA…INGS, INGT…YHGG, LNSP…QHQQ, HHHH…PQHS, SINS…SNSI, QNYN…TLIN, NFINNNSNNNNNMEIDDDDEDGIDGIEGEDDSKKRMR, and ISFG…TLIS. Over residues 73–96 the composition is skewed to polar residues; that stretch reads NPKMNNQPNETRLPSPPLLNSTVP. The segment covering 132–147 has biased composition (low complexity); the sequence is SLNSSNNNNNNNFNNS. Polar residues predominate over residues 148–158; that stretch reads RPTFSSCSGNS. Low complexity-rich tracts occupy residues 159–177 and 315–326; these read NNTTTTTTTTTTTNPINGS and SNHSNNNNNNNN. Positions 327–339 are enriched in basic residues; that stretch reads NHHHHHHHHHQKR. The span at 348-378 shows a compositional bias: low complexity; it reads TNHLTPLPLLHKHTNNNNNINNNNNHNHNNI. A compositionally biased stretch (polar residues) spans 379 to 393; that stretch reads LGSPNQLNRSQDFTS. 5 stretches are compositionally biased toward low complexity: residues 394-408, 415-426, 641-693, 709-731, and 770-793; these read KNNNINNNNNNNNKI, NKGSPNQNSSEN, NNNS…NNNI, HHQQQLQHQQHQQQQLLHQQHQQ, and QQQQQQQQQQQHNNNNNNNNSNHN. A coiled-coil region spans residues 738–789; it reads QQQLQIQYQQQQTHNNNLNQTQQLYYNHHHHQQQQQQQQQQQQHNNNNNNNN. Composition is skewed to polar residues over residues 794–818 and 857–883; these read SVLTSPPLSQFPKTPLQLSQTPQHS and SINSNSGMSLPMISSPSPNLSHMQKNR. Composition is skewed to low complexity over residues 889–911, 1001–1031, and 1045–1063; these read ILNSSLSSSNTTNSATTSSSNSI, QNYNENNNNNNNNNNNNYNINNINNNNNNNF, and NINNNNNNNNNNNNNNNNN. Basic and acidic residues predominate over residues 1064–1078; sequence KNDKNESEFESKEKL. A compositionally biased stretch (polar residues) spans 1081–1095; that stretch reads PFGSSIPNIVNNEQL. Low complexity-rich tracts occupy residues 1096 to 1116, 1123 to 1137, and 1166 to 1177; these read SPYSQQSLSSSSSENPSPQWS, TSSSKLSNSTSTLIN, and NFINNNSNNNNN. A compositionally biased stretch (acidic residues) spans 1179-1195; sequence EIDDDDEDGIDGIEGED. Residues 1198–1261 constitute a DNA-binding region (homeobox); it reads KKRMRKTTRP…NRRTKDKLKN (64 aa). Over residues 1275-1294 the composition is skewed to low complexity; the sequence is SSTSSTQTSTNSPSSQLSPL. The span at 1297 to 1316 shows a compositional bias: polar residues; that stretch reads NMNNNDQQSISTPSLILSQI. Positions 1317–1334 are enriched in low complexity; it reads NNNQNNNQNNNNNNNTNN.

It localises to the nucleus. In terms of biological role, putative transcription factor. This chain is Homeobox protein 13 (hbx13), found in Dictyostelium discoideum (Social amoeba).